We begin with the raw amino-acid sequence, 2123 residues long: Toxin Afp18 (2123 aa).

The interval 864 to 919 is disordered; that stretch reads FFDNSDQDADQPRVRRKREMTDEIMLSDGSSRSEAKALPDENELDTDQSKSRPESA. Residues 1771 to 2123 form a tyrosine glycosyltransferase region; the sequence is VFDSANTNRS…GNSTQSSGLS (353 aa). Residues 1850–1852 and 1940–1941 contribute to the UDP-N-acetyl-alpha-D-glucosamine site; these read IWV and SD. A divalent metal cation is bound by residues D1957 and D1959. The short motif at 1957–1960 is the DxDD motif element; that stretch reads DIDD. N1993 provides a ligand contact to UDP-N-acetyl-alpha-D-glucosamine.

A divalent metal cation is required as a cofactor.

It localises to the secreted. The protein localises to the host cell membrane. It carries out the reaction L-tyrosyl-[protein] + UDP-N-acetyl-alpha-D-glucosamine = O-(N-acetyl-alpha-D-glucosaminyl)-L-tyrosyl-[protein] + UDP + H(+). In terms of biological role, toxin component of the prophage tail-derived protein translocation system Afp, which is the causative agent of enteric redmouth disease in salmonid fish species. Mono-O-GlcNAcylates the small GTPase RhoA in eukaryotic host cells at Tyr-34, using UDP-N-acetylglucosamine (UDP-GlcNAc) as the sugar donor. Glycosylation of RhoA results in impaired effector and regulator interaction and inactivation of downstream RhoA signaling which leads to actin filament depolymerization and blocks cytokinesis and gastrulation during zebrafish embryo development. To a lesser extent, is also able to glycosylate other Rho family GTPases (RhoB, RhoC, Rac1, Rac2, Rac3, and Cdc42) in vitro at a switch I tyrosine residue, but not Ras proteins. In Yersinia ruckeri serotype O1 (strain ATCC 29473 / DSM 18506 / JCM 15110 / CCUG 14190 / NCIMB 2194 / NCTC 12986 / 2396-61), this protein is Toxin Afp18.